Consider the following 250-residue polypeptide: Large ribosomal subunit protein uL30B (250 aa).

The protein belongs to the universal ribosomal protein uL30 family. In terms of assembly, component of the large ribosomal subunit (LSU). Mature yeast ribosomes consist of a small (40S) and a large (60S) subunit. The 40S small subunit contains 1 molecule of ribosomal RNA (18S rRNA) and at least 33 different proteins. The large 60S subunit contains 3 rRNA molecules (25S, 5.8S and 5S rRNA) and at least 46 different proteins.

It localises to the cytoplasm. The protein localises to the nucleus. It is found in the nucleolus. Its function is as follows. Component of the ribosome, a large ribonucleoprotein complex responsible for the synthesis of proteins in the cell. The small ribosomal subunit (SSU) binds messenger RNAs (mRNAs) and translates the encoded message by selecting cognate aminoacyl-transfer RNA (tRNA) molecules. The large subunit (LSU) contains the ribosomal catalytic site termed the peptidyl transferase center (PTC), which catalyzes the formation of peptide bonds, thereby polymerizing the amino acids delivered by tRNAs into a polypeptide chain. The nascent polypeptides leave the ribosome through a tunnel in the LSU and interact with protein factors that function in enzymatic processing, targeting, and the membrane insertion of nascent chains at the exit of the ribosomal tunnel. The chain is Large ribosomal subunit protein uL30B (rpl702) from Schizosaccharomyces pombe (strain 972 / ATCC 24843) (Fission yeast).